Reading from the N-terminus, the 2262-residue chain is Klarsicht protein (2262 aa).

Disordered stretches follow at residues 1–140, 345–410, 442–475, 514–561, 800–832, 859–898, 1000–1031, 1115–1157, 1246–1316, and 1533–1670; these read MEMQ…VGND, QQQQ…GEGN, AANG…LNEV, QSQS…PDIG, ATSS…DKEN, SNYD…QLQM, HLPP…VSPV, PSCK…SEGF, SGLA…ELGG, and VRRK…QQSR. The segment at 1 to 1774 is required for apical microtubules localization; it reads MEMQQENETG…KPTPELLDTE (1774 aa). The Cytoplasmic segment spans residues 1-2215; that stretch reads MEMQQENETG…KRGWAWRIAR (2215 aa). Residues 58-67 show a composition bias toward basic and acidic residues; that stretch reads KIEHTTKPLK. A compositionally biased stretch (polar residues) spans 131–140; it reads NYGTNSVGND. Positions 345 to 402 are enriched in low complexity; sequence QQQQLSSQQPASLTSNCSSESTSESATKSSSLSSGFASDPVTTPIGTAAAAPPSSSTH. A compositionally biased stretch (acidic residues) spans 446–475; the sequence is LDDDEDEEEDTEDDSFGYEGEATEDDLNEV. Over residues 514-525 the composition is skewed to low complexity; it reads QSQSRSQQVPSQ. Positions 546–560 are enriched in acidic residues; sequence EADEELEEEDEDPDI. Low complexity-rich tracts occupy residues 809 to 818 and 859 to 881; these read STAVSSTTAT and SNYD…SNSN. Residues 882-894 show a composition bias toward polar residues; that stretch reads GRLTETSATSRVT. The segment covering 1006–1018 has biased composition (low complexity); sequence PAKSAKSTKSQAS. A compositionally biased stretch (polar residues) spans 1019 to 1028; sequence NATVSGSTLV. Positions 1246-1259 are enriched in polar residues; it reads SGLASHSISESALD. Low complexity predominate over residues 1267-1280; the sequence is PRAASSSGTGSNAA. Residues 1288 to 1299 show a composition bias toward basic residues; that stretch reads SLRRRKARKKRI. Low complexity predominate over residues 1550 to 1559; it reads QSDQQQQQLQ. Over residues 1560 to 1583 the composition is skewed to polar residues; it reads VTPSLSASATALMTTPKNQSTSHQ. Composition is skewed to basic and acidic residues over residues 1586 to 1596 and 1610 to 1640; these read HRAESVGRKLD and RTSE…EKCI. Residues 1809-1842 adopt a coiled-coil conformation; sequence LTKQERRLQSALEEQEQQQESEQLKQQKLVEEEK. Positions 2092–2205 are disordered; the sequence is HQQKQQIQQN…GEGADPAQTS (114 aa). Over residues 2093-2105 the composition is skewed to low complexity; that stretch reads QQKQQIQQNQTQQ. A compositionally biased stretch (basic residues) spans 2130–2142; the sequence is RRGKGARKARQAK. The KASH domain occupies 2207-2262; the sequence is RGWAWRIARAAVPMQVALFTIFCAACLMQPNCCDNLNNLSMSFTPQLRYIRGPPPI. Residues 2216-2236 traverse the membrane as a helical; Anchor for type IV membrane protein segment; it reads AAVPMQVALFTIFCAACLMQP. Residues 2237 to 2262 are Perinuclear space-facing; that stretch reads NCCDNLNNLSMSFTPQLRYIRGPPPI.

It belongs to the nesprin family. As to quaternary structure, core component of LINC complexes which are composed of inner nuclear membrane SUN domain-containing proteins coupled to outer nuclear membrane KASH domain-containing nesprins. Interacts with kud. Interacts with Msp300; this interaction allows the anchoring of Msp300 nuclear ring structure to the nuclear envelope. Expressed ubiquitously in the eye disk, but at much higher levels posterior to the morphogenetic furrow. Expressed in R-cells and also in non-neural cone cells.

It is found in the cytoplasm. Its subcellular location is the cytoskeleton. It localises to the microtubule organizing center. The protein resides in the perinuclear region. The protein localises to the nucleus membrane. It is found in the nucleus envelope. Its function is as follows. Component of the LINC (LInker of Nucleoskeleton and Cytoskeleton) complex involved in the connection between the nuclear lamina and the cytoskeleton. Plays a role in the nuclear positioning and links the nucleus to the microtubule organizing center (MTOC). Collaborates with Klar to promote even spacing of the myonuclei at the periphery of striated muscle fibers by mediating a tight association between a nuclear ring structure of Msp300 and the plus ends of a unique astral microtubule (MT) network. This Drosophila melanogaster (Fruit fly) protein is Klarsicht protein.